Reading from the N-terminus, the 301-residue chain is UBX domain-containing protein 2 (301 aa).

The disordered stretch occupies residues 1-61 (MSRNIRTFRD…AARGPDSEAH (61 aa)). The 65-residue stretch at 89 to 153 (TISLTLHLWS…KVNRHHEEYV (65 aa)) folds into the SEP domain. The segment at 176 to 200 (GQSSSSATTAGTSSATTDHNPDHTA) is disordered. Residues 178-192 (SSSSATTAGTSSATT) are compositionally biased toward low complexity. Positions 218–295 (MNEPTTNIQI…NVLNSVVAVK (78 aa)) constitute a UBX domain.

Belongs to the NSFL1C family. As to quaternary structure, interacts with cdc-48.1 (via N-terminus) and cdc-48.2 (via N-terminus). Interacts with kinase air-1. As to expression, expressed in the germline (at protein level). Expressed in spermatocytes but not in mature sperm (at protein level). Ubiquitously expressed. Predominantly expressed in the spermatheca.

The protein resides in the cytoplasm. It localises to the perinuclear region. Its subcellular location is the nucleus. It is found in the cytoskeleton. The protein localises to the microtubule organizing center. The protein resides in the centrosome. Its function is as follows. Ubiquitin-binding protein which acts as an adapter for ATPase cdc-48.1 and/or cdc-48.2, conferring substrate specificity. Together with ubxn-2 and ubxn-3, plays a role in hermaphrodite spermatogenesis probably by promoting the degradation of sex determination terminal factor tra-1. Probably in association with ATPase cdc-48.1 or/and cdc-48.2, regulates the centrosomal levels of kinase air-1 levels during mitotic progression by promoting air-1 removal from centrosomes in prophase. Also, regulates spindle orientation in the one-cell embryo by controlling centration and rotation of the pronuclei-centrosome complex in prophase. This is UBX domain-containing protein 2 from Caenorhabditis elegans.